Here is a 313-residue protein sequence, read N- to C-terminus: MNKPVAIFLMGPTASGKTDLAIALRKQLPVEVISVDSALIYKEMDIGTAKPTAAELAQAPHRLIDILDPKESYSAMHFHADALHAMADITASGRIPLLVGGTMLYYKALLEGLSPLPSANEHIRTEIEAHANQYGWASLHQQLTQIDPLAASRINANDSQRINRALEVFYLTGKNLTELTAQQGECLPYQVLQFAIAPQERAVLHQRIEQRFHKMMELGFLTEVEKLYARGDLHPDLPAIRCVGYRQMWQHLAGEISLDEAIYKGICATRQLAKRQLTWLRGWRSEITWLDSLDPTSSQEKMIQNLEQNFIKL.

ATP is bound at residue 11 to 18 (GPTASGKT). 13–18 (TASGKT) is a binding site for substrate. 3 interaction with substrate tRNA regions span residues 36 to 39 (DSAL), 160 to 164 (QRINR), and 241 to 246 (RCVGYR).

This sequence belongs to the IPP transferase family. As to quaternary structure, monomer. Requires Mg(2+) as cofactor.

It catalyses the reaction adenosine(37) in tRNA + dimethylallyl diphosphate = N(6)-dimethylallyladenosine(37) in tRNA + diphosphate. Catalyzes the transfer of a dimethylallyl group onto the adenine at position 37 in tRNAs that read codons beginning with uridine, leading to the formation of N6-(dimethylallyl)adenosine (i(6)A). The chain is tRNA dimethylallyltransferase from Haemophilus ducreyi (strain 35000HP / ATCC 700724).